We begin with the raw amino-acid sequence, 149 residues long: NADH-quinone oxidoreductase subunit A (149 aa).

A run of 3 helical transmembrane segments spans residues 16–36 (FGIF…GAWF), 68–88 (FYLV…LFAW), and 98–118 (LGFI…VYLV).

The protein belongs to the complex I subunit 3 family. As to quaternary structure, NDH-1 is composed of 13 different subunits. Subunits NuoA, H, J, K, L, M, N constitute the membrane sector of the complex.

It is found in the cell inner membrane. The enzyme catalyses a quinone + NADH + 5 H(+)(in) = a quinol + NAD(+) + 4 H(+)(out). Functionally, NDH-1 shuttles electrons from NADH, via FMN and iron-sulfur (Fe-S) centers, to quinones in the respiratory chain. The immediate electron acceptor for the enzyme in this species is believed to be ubiquinone. Couples the redox reaction to proton translocation (for every two electrons transferred, four hydrogen ions are translocated across the cytoplasmic membrane), and thus conserves the redox energy in a proton gradient. The protein is NADH-quinone oxidoreductase subunit A of Cronobacter sakazakii (strain ATCC BAA-894) (Enterobacter sakazakii).